The following is a 458-amino-acid chain: uncharacterized protein (458 aa).

This sequence belongs to the MG032/MG096/MG288 family.

This is an uncharacterized protein from Mycoplasma pneumoniae (strain ATCC 29342 / M129 / Subtype 1) (Mycoplasmoides pneumoniae).